A 309-amino-acid polypeptide reads, in one-letter code: D-alanine--D-alanine ligase (309 aa).

Positions 106–305 constitute an ATP-grasp domain; the sequence is KMLWKAFGLP…FEQLVVKILE (200 aa). 136–191 serves as a coordination point for ATP; it reads VEKLGLPVMVKPSLEGSSVGLTKVKRVEDLKSAVDFALKYDDTVLIEEWLSGAEFT. Residues Asp259, Glu272, and Asn274 each coordinate Mg(2+).

It belongs to the D-alanine--D-alanine ligase family. Mg(2+) is required as a cofactor. It depends on Mn(2+) as a cofactor.

The protein resides in the cytoplasm. It catalyses the reaction 2 D-alanine + ATP = D-alanyl-D-alanine + ADP + phosphate + H(+). The protein operates within cell wall biogenesis; peptidoglycan biosynthesis. Cell wall formation. In Pasteurella multocida (strain Pm70), this protein is D-alanine--D-alanine ligase.